A 197-amino-acid chain; its full sequence is Probable GTP-binding protein EngB (197 aa).

The EngB-type G domain occupies 22–194 (DLPEIAFAGR…LETIARMTGI (173 aa)). GTP is bound by residues 30–37 (GRSNVGKS), 57–61 (GKTRL), 75–78 (DLPG), 142–145 (TKAD), and 173–175 (FST). Mg(2+) contacts are provided by Ser37 and Thr59.

This sequence belongs to the TRAFAC class TrmE-Era-EngA-EngB-Septin-like GTPase superfamily. EngB GTPase family. Requires Mg(2+) as cofactor.

In terms of biological role, necessary for normal cell division and for the maintenance of normal septation. This chain is Probable GTP-binding protein EngB, found in Desulfosudis oleivorans (strain DSM 6200 / JCM 39069 / Hxd3) (Desulfococcus oleovorans).